A 214-amino-acid chain; its full sequence is Thiamine-phosphate synthase (214 aa).

Residues glutamine 37–lysine 41 and asparagine 73 each bind 4-amino-2-methyl-5-(diphosphooxymethyl)pyrimidine. Aspartate 74 and aspartate 93 together coordinate Mg(2+). Serine 112 lines the 4-amino-2-methyl-5-(diphosphooxymethyl)pyrimidine pocket. Position 139 to 141 (threonine 139 to serine 141) interacts with 2-[(2R,5Z)-2-carboxy-4-methylthiazol-5(2H)-ylidene]ethyl phosphate. Lysine 142 contributes to the 4-amino-2-methyl-5-(diphosphooxymethyl)pyrimidine binding site. Residues glycine 171 and isoleucine 191–serine 192 each bind 2-[(2R,5Z)-2-carboxy-4-methylthiazol-5(2H)-ylidene]ethyl phosphate.

This sequence belongs to the thiamine-phosphate synthase family. It depends on Mg(2+) as a cofactor.

It carries out the reaction 2-[(2R,5Z)-2-carboxy-4-methylthiazol-5(2H)-ylidene]ethyl phosphate + 4-amino-2-methyl-5-(diphosphooxymethyl)pyrimidine + 2 H(+) = thiamine phosphate + CO2 + diphosphate. It catalyses the reaction 2-(2-carboxy-4-methylthiazol-5-yl)ethyl phosphate + 4-amino-2-methyl-5-(diphosphooxymethyl)pyrimidine + 2 H(+) = thiamine phosphate + CO2 + diphosphate. The catalysed reaction is 4-methyl-5-(2-phosphooxyethyl)-thiazole + 4-amino-2-methyl-5-(diphosphooxymethyl)pyrimidine + H(+) = thiamine phosphate + diphosphate. It participates in cofactor biosynthesis; thiamine diphosphate biosynthesis; thiamine phosphate from 4-amino-2-methyl-5-diphosphomethylpyrimidine and 4-methyl-5-(2-phosphoethyl)-thiazole: step 1/1. In terms of biological role, condenses 4-methyl-5-(beta-hydroxyethyl)thiazole monophosphate (THZ-P) and 2-methyl-4-amino-5-hydroxymethyl pyrimidine pyrophosphate (HMP-PP) to form thiamine monophosphate (TMP). The sequence is that of Thiamine-phosphate synthase from Listeria innocua serovar 6a (strain ATCC BAA-680 / CLIP 11262).